The following is a 183-amino-acid chain: Bifunctional protein PyrR (183 aa).

The PRPP-binding signature appears at 100–112 (VILVDDVLYTGRT).

Belongs to the purine/pyrimidine phosphoribosyltransferase family. PyrR subfamily.

It carries out the reaction UMP + diphosphate = 5-phospho-alpha-D-ribose 1-diphosphate + uracil. Regulates the transcription of the pyrimidine nucleotide (pyr) operon in response to exogenous pyrimidines. Functionally, also displays a weak uracil phosphoribosyltransferase activity which is not physiologically significant. This chain is Bifunctional protein PyrR, found in Deinococcus deserti (strain DSM 17065 / CIP 109153 / LMG 22923 / VCD115).